The following is a 425-amino-acid chain: Glutamyl-tRNA reductase (425 aa).

Residues threonine 49–arginine 52, serine 109, glutamate 114–glutamine 116, and glutamine 120 contribute to the substrate site. Cysteine 50 acts as the Nucleophile in catalysis. Glycine 189 to glycine 194 serves as a coordination point for NADP(+).

It belongs to the glutamyl-tRNA reductase family. In terms of assembly, homodimer.

The catalysed reaction is (S)-4-amino-5-oxopentanoate + tRNA(Glu) + NADP(+) = L-glutamyl-tRNA(Glu) + NADPH + H(+). The protein operates within porphyrin-containing compound metabolism; protoporphyrin-IX biosynthesis; 5-aminolevulinate from L-glutamyl-tRNA(Glu): step 1/2. Its pathway is porphyrin-containing compound metabolism; chlorophyll biosynthesis. Functionally, catalyzes the NADPH-dependent reduction of glutamyl-tRNA(Glu) to glutamate 1-semialdehyde (GSA). The sequence is that of Glutamyl-tRNA reductase from Chlorobium luteolum (strain DSM 273 / BCRC 81028 / 2530) (Pelodictyon luteolum).